The sequence spans 630 residues: Multidrug transporter TPO3 (630 aa).

Positions 1 to 35 are enriched in polar residues; it reads MVDQESLVSFSSETSQSINSDIDIESQQQPRQYIP. Disordered stretches follow at residues 1-46 and 107-157; these read MVDQ…KERL and TSTA…NQQP. A compositionally biased stretch (basic and acidic residues) spans 37 to 46; sequence NEKDGNKERL. The span at 125 to 137 shows a compositional bias: low complexity; the sequence is RRSQNIAASSNSS. Residue N135 is glycosylated (N-linked (GlcNAc...) asparagine). 12 helical membrane-spanning segments follow: residues 190–210, 222–242, 252–272, 282–302, 312–332, 342–362, 423–443, 453–473, 494–514, 519–539, 553–575, and 587–607; these read ILSC…GGLF, AAIL…LIWS, LAYF…ALSP, FLCG…IADM, IAFF…VNGF, LIFW…AFIP, FYVC…PVVF, LIGL…ATTF, LFGA…LGAT, IIWV…VLIY, YASS…FPLF, and WASW…FGFY.

This sequence belongs to the major facilitator superfamily. DHA1 family. Polyamines/proton antiporter (TC 2.A.1.2.16) subfamily.

It is found in the cell membrane. In terms of biological role, cell membrane polyamine/proton antiporter, involved in the detoxification of excess polyamines in the cytoplasm. Involved in the resistance to the imidazole antifungal drugs tioconazole, miconazole, clotrimazole and ketoconazole; to the triazole fluconazole; but not to the antifungals flucytosine or amphotericin B. Plays a role in spermine homeostasis, but spermine accumulation in response to clotrimazole is independent of TPO3. In Candida glabrata (strain ATCC 2001 / BCRC 20586 / JCM 3761 / NBRC 0622 / NRRL Y-65 / CBS 138) (Yeast), this protein is Multidrug transporter TPO3.